The following is a 377-amino-acid chain: Gastricsin (377 aa).

A signal peptide spans 1–5; it reads QLLEA. Propeptides (activation peptide) lie at residues 6-31 and 32-48; these read AVVKVPLKKFKSIRETMKEKGLLGEF and LRTHKYDPAWKYHFGDL. In terms of domain architecture, Peptidase A1 spans 62–374; it reads YFGEISIGTP…DLSNNRVGFA (313 aa). Residue Asp-80 is part of the active site. Intrachain disulfides connect Cys-93-Cys-98 and Cys-256-Cys-260. The active site involves Asp-265. A disulfide bridge connects residues Cys-299 and Cys-332.

Belongs to the peptidase A1 family. Post-translationally, each pepsinogen is converted to corresponding pepsin at pH 2.0 in part as a result of the release of a 47 AA activation segment and in part as a result of stepwise proteolytic cleavage via an intermediate form(s).

The protein localises to the secreted. The enzyme catalyses More restricted specificity than pepsin A, but shows preferential cleavage at Tyr-|-Xaa bonds. High activity on hemoglobin.. Its function is as follows. Hydrolyzes a variety of proteins. This Macaca fuscata fuscata (Japanese macaque) protein is Gastricsin (PGC).